The chain runs to 473 residues: MTPEEWTYLMVLLISIPVGFLFKKAGPGLKRWGAAAVGLGLTLFTCGPHSLHSLITILGTWALIQAQPCSCHALALAWTFSYLLFFRALSLLGLPTPTPFTNAVQLLLTLKLVSLASEVQDLHLAQRKEIASGFHKEPTLGLLPEVPSLMETLSYSYCYVGIMTGPFFRYRTYLDWLEQPFPEAVPSLRPLLRRAWPAPLFGLLFLLSSHLFPLEAVREDAFYARPLPTRLFYMIPVFFAFRMRFYVAWIAAECGCIAAGFGAYPVAAKARAGGGPTLQCPPPSSPEIAASLEYDYETIRNIDCYGTDFCVRVRDGMRYWNMTVQWWLAQYIYKSAPFRSYVLRSAWTMLLSAYWHGLHPGYYLSFMTIPLCLAAEGYLESALRRHLSPGGQKAWDWVHWFLKMRAYDYMCMGFVLLSMADTLRYWASIYFWVHFLALACLGLGLVLGGGSPSKRKTPSQATSSQAKEKLREE.

At 1–5 (MTPEE) the chain is on the cytoplasmic side. A helical membrane pass occupies residues 6–22 (WTYLMVLLISIPVGFLF). Residues 23-33 (KKAGPGLKRWG) are Lumenal-facing. Residues 34-57 (AAAVGLGLTLFTCGPHSLHSLITI) traverse the membrane as a helical segment. The Cytoplasmic portion of the chain corresponds to 58 to 73 (LGTWALIQAQPCSCHA). The chain crosses the membrane as a helical span at residues 74 to 93 (LALAWTFSYLLFFRALSLLG). The Lumenal portion of the chain corresponds to 94-194 (LPTPTPFTNA…VPSLRPLLRR (101 aa)). The chain crosses the membrane as a helical span at residues 195–212 (AWPAPLFGLLFLLSSHLF). Over 213–231 (PLEAVREDAFYARPLPTRL) the chain is Cytoplasmic. The helical transmembrane segment at 232–261 (FYMIPVFFAFRMRFYVAWIAAECGCIAAGF) threads the bilayer. Residues 262–426 (GAYPVAAKAR…LSMADTLRYW (165 aa)) lie on the Lumenal side of the membrane. Asparagine 321 is a glycosylation site (N-linked (GlcNAc...) asparagine). A helical transmembrane segment spans residues 427–447 (ASIYFWVHFLALACLGLGLVL). Residues 448 to 473 (GGGSPSKRKTPSQATSSQAKEKLREE) are Cytoplasmic-facing. The disordered stretch occupies residues 451–473 (SPSKRKTPSQATSSQAKEKLREE).

Belongs to the membrane-bound acyltransferase family. Interacts with SPTSSA; the interaction facilitates MBOAT7 location to mitochondria-associated membranes (MAMs).

It localises to the endoplasmic reticulum membrane. The catalysed reaction is a 1-acyl-sn-glycero-3-phospho-(1D-myo-inositol) + an acyl-CoA = a 1,2-diacyl-sn-glycero-3-phospho-(1D-myo-inositol) + CoA. The enzyme catalyses 1-octadecanoyl-sn-glycero-3-phospho-(1D-myo-inositol) + (5Z,8Z,11Z,14Z)-eicosatetraenoyl-CoA = 1-octadecanoyl-2-(5Z,8Z,11Z,14Z-eicosatetraenoyl)-sn-glycero-3-phospho-(1D-myo-inositol) + CoA. It carries out the reaction a 1-acyl-sn-glycero-3-phospho-(1D-myo-inositol) + (5Z,8Z,11Z,14Z)-eicosatetraenoyl-CoA = a 1-acyl-2-(5Z,8Z,11Z,14Z-eicosatetraenoyl)-sn-glycero-3-phospho-(1D-myo-inositol) + CoA. It catalyses the reaction (5Z,8Z,11Z,14Z)-eicosatetraenoyl-CoA + 1-hexadecanoyl-sn-glycero-3-phosphocholine = 1-hexadecanoyl-2-(5Z,8Z,11Z,14Z-eicosatetraenoyl)-sn-glycero-3-phosphocholine + CoA. It participates in lipid metabolism; phospholipid metabolism. In terms of biological role, acyltransferase which catalyzes the transfer of an acyl group from an acyl-CoA to a lysophosphatidylinositol (1-acylglycerophosphatidylinositol or LPI) leading to the production of a phosphatidylinositol (1,2-diacyl-sn-glycero-3-phosphoinositol or PI) and participates in the reacylation step of the phospholipid remodeling pathway also known as the Lands cycle. Prefers arachidonoyl-CoA as the acyl donor, thus contributing to the regulation of free levels arachidonic acid in cell. In liver, participates in the regulation of triglyceride metabolism through the phosphatidylinositol acyl-chain remodeling regulation. In Mus musculus (Mouse), this protein is Membrane-bound acylglycerophosphatidylinositol O-acyltransferase MBOAT7.